A 262-amino-acid chain; its full sequence is Pyridoxine 5'-phosphate synthase (262 aa).

N6 is a 3-amino-2-oxopropyl phosphate binding site. Residue 8–9 (DH) participates in 1-deoxy-D-xylulose 5-phosphate binding. R17 lines the 3-amino-2-oxopropyl phosphate pocket. Catalysis depends on H43, which acts as the Proton acceptor. 1-deoxy-D-xylulose 5-phosphate-binding residues include R45 and H50. The active-site Proton acceptor is the E70. T102 lines the 1-deoxy-D-xylulose 5-phosphate pocket. H215 serves as the catalytic Proton donor. Residues G216 and 237 to 238 (GH) contribute to the 3-amino-2-oxopropyl phosphate site.

The protein belongs to the PNP synthase family. In terms of assembly, homooctamer; tetramer of dimers.

Its subcellular location is the cytoplasm. The enzyme catalyses 3-amino-2-oxopropyl phosphate + 1-deoxy-D-xylulose 5-phosphate = pyridoxine 5'-phosphate + phosphate + 2 H2O + H(+). It functions in the pathway cofactor biosynthesis; pyridoxine 5'-phosphate biosynthesis; pyridoxine 5'-phosphate from D-erythrose 4-phosphate: step 5/5. Catalyzes the complicated ring closure reaction between the two acyclic compounds 1-deoxy-D-xylulose-5-phosphate (DXP) and 3-amino-2-oxopropyl phosphate (1-amino-acetone-3-phosphate or AAP) to form pyridoxine 5'-phosphate (PNP) and inorganic phosphate. The sequence is that of Pyridoxine 5'-phosphate synthase from Helicobacter pylori (strain HPAG1).